The sequence spans 136 residues: Large ribosomal subunit protein bL19 (136 aa).

The disordered stretch occupies residues 1 to 23; it reads MEETVNNQETPETSEEETADEET. Acidic residues predominate over residues 12-23; the sequence is ETSEEETADEET.

It belongs to the bacterial ribosomal protein bL19 family.

Functionally, this protein is located at the 30S-50S ribosomal subunit interface and may play a role in the structure and function of the aminoacyl-tRNA binding site. The sequence is that of Large ribosomal subunit protein bL19 from Dehalococcoides mccartyi (strain ATCC BAA-2266 / KCTC 15142 / 195) (Dehalococcoides ethenogenes (strain 195)).